Reading from the N-terminus, the 193-residue chain is dCTP deaminase (193 aa).

Residues Arg-110 to Arg-115, Asp-128, Val-136 to Glu-138, Tyr-171, Lys-178, and Gln-182 contribute to the dCTP site. The active-site Proton donor/acceptor is the Glu-138. The segment at Arg-169 to Asp-193 is disordered.

Belongs to the dCTP deaminase family. Homotrimer.

The catalysed reaction is dCTP + H2O + H(+) = dUTP + NH4(+). It functions in the pathway pyrimidine metabolism; dUMP biosynthesis; dUMP from dCTP (dUTP route): step 1/2. In terms of biological role, catalyzes the deamination of dCTP to dUTP. This is dCTP deaminase from Salmonella arizonae (strain ATCC BAA-731 / CDC346-86 / RSK2980).